The primary structure comprises 209 residues: MFHKELLKLYFICGTTTCQGKNLYTVVEEALKGGITLFQFREKGEGALEGLEKLELAIQIKELCKKYNVPFIVNDDIDLAMEIDADGVHVGQDDIGVDEIRKLMPDKIIGLSIRNEEEFQQSKVEYVDYVGVGPVFGTQSKDDAGGTIGYEGLELMRKLLPQMPLVAIGGIQTKHIKDIIKTNMDGVSIISAISYAKNIEKTVREMSEQ.

Residues 39–43 (QFREK) and Asn74 each bind 4-amino-2-methyl-5-(diphosphooxymethyl)pyrimidine. Mg(2+) is bound by residues Asp75 and Asp94. Residue Ser112 participates in 4-amino-2-methyl-5-(diphosphooxymethyl)pyrimidine binding. 138–140 (TQS) contacts 2-[(2R,5Z)-2-carboxy-4-methylthiazol-5(2H)-ylidene]ethyl phosphate. A 4-amino-2-methyl-5-(diphosphooxymethyl)pyrimidine-binding site is contributed by Lys141. 2-[(2R,5Z)-2-carboxy-4-methylthiazol-5(2H)-ylidene]ethyl phosphate is bound by residues Gly170 and 190 to 191 (IS).

The protein belongs to the thiamine-phosphate synthase family. It depends on Mg(2+) as a cofactor.

It carries out the reaction 2-[(2R,5Z)-2-carboxy-4-methylthiazol-5(2H)-ylidene]ethyl phosphate + 4-amino-2-methyl-5-(diphosphooxymethyl)pyrimidine + 2 H(+) = thiamine phosphate + CO2 + diphosphate. The enzyme catalyses 2-(2-carboxy-4-methylthiazol-5-yl)ethyl phosphate + 4-amino-2-methyl-5-(diphosphooxymethyl)pyrimidine + 2 H(+) = thiamine phosphate + CO2 + diphosphate. It catalyses the reaction 4-methyl-5-(2-phosphooxyethyl)-thiazole + 4-amino-2-methyl-5-(diphosphooxymethyl)pyrimidine + H(+) = thiamine phosphate + diphosphate. It functions in the pathway cofactor biosynthesis; thiamine diphosphate biosynthesis; thiamine phosphate from 4-amino-2-methyl-5-diphosphomethylpyrimidine and 4-methyl-5-(2-phosphoethyl)-thiazole: step 1/1. Its function is as follows. Condenses 4-methyl-5-(beta-hydroxyethyl)thiazole monophosphate (THZ-P) and 2-methyl-4-amino-5-hydroxymethyl pyrimidine pyrophosphate (HMP-PP) to form thiamine monophosphate (TMP). The protein is Thiamine-phosphate synthase 1 of Streptococcus pneumoniae serotype 4 (strain ATCC BAA-334 / TIGR4).